The chain runs to 154 residues: 6,7-dimethyl-8-ribityllumazine synthase (154 aa).

Residues Phe-22, 56-58 (SFE), and 80-82 (AVI) each bind 5-amino-6-(D-ribitylamino)uracil. A (2S)-2-hydroxy-3-oxobutyl phosphate-binding site is contributed by 85–86 (ST). The Proton donor role is filled by His-88. Tyr-113 serves as a coordination point for 5-amino-6-(D-ribitylamino)uracil. Arg-127 is a binding site for (2S)-2-hydroxy-3-oxobutyl phosphate.

This sequence belongs to the DMRL synthase family. As to quaternary structure, forms an icosahedral capsid composed of 60 subunits, arranged as a dodecamer of pentamers.

It catalyses the reaction (2S)-2-hydroxy-3-oxobutyl phosphate + 5-amino-6-(D-ribitylamino)uracil = 6,7-dimethyl-8-(1-D-ribityl)lumazine + phosphate + 2 H2O + H(+). It participates in cofactor biosynthesis; riboflavin biosynthesis; riboflavin from 2-hydroxy-3-oxobutyl phosphate and 5-amino-6-(D-ribitylamino)uracil: step 1/2. Catalyzes the formation of 6,7-dimethyl-8-ribityllumazine by condensation of 5-amino-6-(D-ribitylamino)uracil with 3,4-dihydroxy-2-butanone 4-phosphate. This is the penultimate step in the biosynthesis of riboflavin. The protein is 6,7-dimethyl-8-ribityllumazine synthase of Persephonella marina (strain DSM 14350 / EX-H1).